A 611-amino-acid chain; its full sequence is Mitochondrial import receptor subunit TOM70 (611 aa).

At Ala-2 the chain carries N-acetylalanine. At 2 to 41 (AASKPIEAAMAAAAAPGSGNGVGGGGGTAGPGSGAGTLPR) the chain is on the mitochondrial intermembrane side. A helical membrane pass occupies residues 42 to 62 (WHVALAIGAPLLLGAGAMYLW). At 63–611 (SRRRRRREAG…KKYGLKPPTL (549 aa)) the chain is on the cytoplasmic side. The disordered stretch occupies residues 69–110 (REAGGRGDASGLKRNSERKTPEGRASPALGSGHHDGSGDSLE). Arg-74 is subject to Omega-N-methylarginine. 5 positions are modified to phosphoserine: Ser-94, Ser-99, Ser-105, Ser-108, and Ser-113. TPR repeat units lie at residues 117–150 (AQAAKNKGNKYFKAGKYEQAIQCYTEAISLCPTE) and 156–189 (STFYQNRAAAFEQLQKWKEVAQDCTKAVELNPKY). Lys-188 is subject to N6-acetyllysine. Lys-278 participates in a covalent cross-link: Glycyl lysine isopeptide (Lys-Gly) (interchain with G-Cter in SUMO2). TPR repeat units follow at residues 297–330 (ENSGYLKAKQYMEEENYDKIISECSKEIDAQGKY), 332–365 (AEALLLRATFYLLIGSANAAKPDLDKVISLKEAN), 370–403 (ANALIKRGTMCMQQQQPMLSTQDFNMAAEIDPMN), 404–437 (SDVYHHRGQLKILLDLVEEAVADFDACIRLRPKF), 445–478 (CFALYRQAYTANNSSQVQAAMKGFEEIIKKFPRC), 479–512 (AEGYALYAQALTDQQQFGKADEMYDKCIDLEPDN), 514–547 (TTYVHKGLLQLQWKQDLDKGLELISKAIEIDNKC), and 548–581 (DFAYETMGTIEVQRGNMEKAIDMFNKAINLAKSE).

It belongs to the Tom70 family. Forms part of the preprotein translocase complex of the outer mitochondrial membrane (TOM complex) which consists of at least 7 different proteins (TOMM5, TOMM6, TOMM7, TOMM20, TOMM22, TOMM40 and TOMM70). Interacts with CAPN8. Interacts with TRADD, TRAF6 and STING. Interacts with MAVS. Interacts with HSPA8 and HSP90AA1; both interactions are required for preprotein mitochondrial import. The interaction with HSP90AA1 is direct and mediates the association of TOMM70 with IRF3 and TBK1. Upon mitochondrial depolarization, interacts with PINK1; the interaction is required for PINK1-TOM-TIM23 supercomplex formation which is critical for PINK1 stabilization at the outer mitochondrial membrane, kinase activation and downstream mitophagy. As to expression, expressed in the base region of the oxyntic and pyloric mucosae.

It is found in the mitochondrion outer membrane. Its function is as follows. Acts as a receptor of the preprotein translocase complex of the outer mitochondrial membrane (TOM complex). Recognizes and mediates the translocation of mitochondrial preproteins from the cytosol into the mitochondria in a chaperone dependent manner. Mediates TBK1 and IRF3 activation induced by MAVS in response to virus infection and promotes host antiviral responses during virus infection. In Mus musculus (Mouse), this protein is Mitochondrial import receptor subunit TOM70.